Reading from the N-terminus, the 54-residue chain is Putative ATP synthase subunit epsilon, mitochondrial (54 aa).

Belongs to the eukaryotic ATPase epsilon family. In terms of assembly, F-type ATPases have 2 components, CF(1) - the catalytic core - and CF(0) - the membrane proton channel. CF(1) has five subunits: alpha(3), beta(3), gamma(1), delta(1), epsilon(1). CF(0) seems to have nine subunits: a, b, c, d, e, f, g, F6 and 8 (or A6L).

The protein resides in the mitochondrion. It localises to the mitochondrion inner membrane. Mitochondrial membrane ATP synthase (F(1)F(0) ATP synthase or Complex V) produces ATP from ADP in the presence of a proton gradient across the membrane which is generated by electron transport complexes of the respiratory chain. F-type ATPases consist of two structural domains, F(1) - containing the extramembraneous catalytic core, and F(0) - containing the membrane proton channel, linked together by a central stalk and a peripheral stalk. During catalysis, ATP synthesis in the catalytic domain of F(1) is coupled via a rotary mechanism of the central stalk subunits to proton translocation. Part of the complex F(1) domain and of the central stalk which is part of the complex rotary element. Rotation of the central stalk against the surrounding alpha(3)beta(3) subunits leads to hydrolysis of ATP in three separate catalytic sites on the beta subunits. The polypeptide is Putative ATP synthase subunit epsilon, mitochondrial (Caenorhabditis elegans).